A 349-amino-acid chain; its full sequence is Dihydroorotate dehydrogenase (quinone) (349 aa).

Residues 59–63 (PGFDK) and Thr83 each bind FMN. Lys63 is a binding site for substrate. 108-112 (NRMGF) is a binding site for substrate. Residues Asn142 and Asn173 each coordinate FMN. Asn173 lines the substrate pocket. Ser176 functions as the Nucleophile in the catalytic mechanism. Asn178 provides a ligand contact to substrate. Positions 212 and 240 each coordinate FMN. 241 to 242 (NT) is a binding site for substrate. FMN contacts are provided by residues Gly262, Gly291, and 312 to 313 (YS).

Belongs to the dihydroorotate dehydrogenase family. Type 2 subfamily. In terms of assembly, monomer. Requires FMN as cofactor.

It is found in the cell membrane. The catalysed reaction is (S)-dihydroorotate + a quinone = orotate + a quinol. It functions in the pathway pyrimidine metabolism; UMP biosynthesis via de novo pathway; orotate from (S)-dihydroorotate (quinone route): step 1/1. Its function is as follows. Catalyzes the conversion of dihydroorotate to orotate with quinone as electron acceptor. The chain is Dihydroorotate dehydrogenase (quinone) from Novosphingobium aromaticivorans (strain ATCC 700278 / DSM 12444 / CCUG 56034 / CIP 105152 / NBRC 16084 / F199).